Reading from the N-terminus, the 94-residue chain is Venom protein 59.1 (94 aa).

Residues 1-22 form the signal peptide; the sequence is MNSREMFCVFILFASFFYCSYA. 6 disulfide bridges follow: Cys-19–Cys-47, Cys-26–Cys-49, Cys-32–Cys-50, Cys-38–Cys-53, Cys-61–Cys-76, and Cys-70–Cys-91. An IGFBP N-terminal domain is found at 23–94; sequence EQECNCDKSC…GEALEICLRA (72 aa).

Expressed by the venom gland.

It is found in the secreted. In Lychas mucronatus (Chinese swimming scorpion), this protein is Venom protein 59.1.